A 397-amino-acid chain; its full sequence is Cytoplasmic tRNA 2-thiolation protein 2 (397 aa).

This sequence belongs to the CTU2/NCS2 family.

The protein localises to the cytoplasm. It participates in tRNA modification; 5-methoxycarbonylmethyl-2-thiouridine-tRNA biosynthesis. In terms of biological role, plays a central role in 2-thiolation of mcm(5)S(2)U at tRNA wobble positions of tRNA(Lys), tRNA(Glu) and tRNA(Gln). May act by forming a heterodimer with NCS6/CTU1 that ligates sulfur from thiocarboxylated URM1 onto the uridine of tRNAs at wobble position. In Drosophila grimshawi (Hawaiian fruit fly), this protein is Cytoplasmic tRNA 2-thiolation protein 2.